A 329-amino-acid polypeptide reads, in one-letter code: 4-hydroxythreonine-4-phosphate dehydrogenase (329 aa).

H137 and T138 together coordinate substrate. Positions 167, 212, and 267 each coordinate a divalent metal cation. Substrate-binding residues include K275, N284, and R293.

It belongs to the PdxA family. Homodimer. It depends on Zn(2+) as a cofactor. Mg(2+) is required as a cofactor. The cofactor is Co(2+).

The protein resides in the cytoplasm. The enzyme catalyses 4-(phosphooxy)-L-threonine + NAD(+) = 3-amino-2-oxopropyl phosphate + CO2 + NADH. Its pathway is cofactor biosynthesis; pyridoxine 5'-phosphate biosynthesis; pyridoxine 5'-phosphate from D-erythrose 4-phosphate: step 4/5. Catalyzes the NAD(P)-dependent oxidation of 4-(phosphooxy)-L-threonine (HTP) into 2-amino-3-oxo-4-(phosphooxy)butyric acid which spontaneously decarboxylates to form 3-amino-2-oxopropyl phosphate (AHAP). In Stutzerimonas stutzeri (strain A1501) (Pseudomonas stutzeri), this protein is 4-hydroxythreonine-4-phosphate dehydrogenase.